The following is a 191-amino-acid chain: Ion-translocating oxidoreductase complex subunit B (191 aa).

The hydrophobic stretch occupies residues 1-26 (MSAVLIAVLALLALCLLGGAILGFAA). The 4Fe-4S domain occupies 32-90 (EGDPIAEQINALLPQTQCGQCGYPGCKPYAEAIAGGDKINKCPPGGEATIQALADLLDV). Cysteine 49, cysteine 52, cysteine 57, cysteine 73, cysteine 114, cysteine 117, cysteine 120, cysteine 124, cysteine 144, cysteine 147, cysteine 150, and cysteine 154 together coordinate [4Fe-4S] cluster. 4Fe-4S ferredoxin-type domains lie at 105-134 (MVAYIREAECIGCTKCIQACPVDAIVGAAR) and 135-164 (QMHTVIISECTGCDLCVEPCPVDCIDMIEV).

The protein belongs to the 4Fe4S bacterial-type ferredoxin family. RnfB subfamily. As to quaternary structure, the complex is composed of six subunits: RnfA, RnfB, RnfC, RnfD, RnfE and RnfG. The cofactor is [4Fe-4S] cluster.

Its subcellular location is the cell inner membrane. Its function is as follows. Part of a membrane-bound complex that couples electron transfer with translocation of ions across the membrane. This chain is Ion-translocating oxidoreductase complex subunit B, found in Stutzerimonas stutzeri (strain A1501) (Pseudomonas stutzeri).